The following is a 130-amino-acid chain: Blasticidin-S deaminase (130 aa).

In terms of domain architecture, CMP/dCMP-type deaminase spans 1 to 129 (MPLSQEESTL…ELLPSGYMNR (129 aa)). Ser28 is a substrate binding site. Cys54 contacts Zn(2+). The Proton donor role is filled by Glu56. Residue Arg82 coordinates substrate. The Zn(2+) site is built by Cys88 and Cys91. A substrate-binding site is contributed by Tyr126.

This sequence belongs to the cytidine and deoxycytidylate deaminase family. Homotetramer. It depends on Zn(2+) as a cofactor.

The catalysed reaction is blasticidin S + H2O + H(+) = deaminohydroxyblasticidin S + NH4(+). In terms of biological role, catalyzes the deamination of the cytosine moiety of the antibiotics blasticidin S, cytomycin and acetylblasticidin S. This is Blasticidin-S deaminase (bsd) from Aspergillus terreus (strain NIH 2624 / FGSC A1156).